The sequence spans 490 residues: Scarecrow-like transcription factor PAT1 (490 aa).

The GRAS domain occupies 110-490; it reads TLEAISRRDL…RDLVASCAWK (381 aa). Residues 117-178 are leucine repeat I (LRI); sequence RDLRADLVSC…AQLASSGSSI (62 aa). A VHIID region spans residues 197–262; it reads MHILYEVCPY…GGPPRIRITG (66 aa). A VHIID motif is present at residues 228 to 232; the sequence is VHIID. Residues 278–310 are leucine repeat II (LRII); the sequence is IVGNRLAKLAKQFNVPFEFNSVSVSVSEVKPKN. Positions 319–413 are PFYRE; sequence LAVNFAFVLH…QHCLARDVVN (95 aa). Residues 416–490 are SAW; that stretch reads ACEGADRVER…RDLVASCAWK (75 aa).

It belongs to the GRAS family.

It localises to the cytoplasm. Its function is as follows. Probable transcription factor involved in phytochrome A (phyA) signal transduction. This chain is Scarecrow-like transcription factor PAT1 (PAT1), found in Arabidopsis thaliana (Mouse-ear cress).